Reading from the N-terminus, the 44-residue chain is Poly-ADP-ribosylation-amplifying and CtIP-maintaining micropeptide (44 aa).

The tract at residues 1–44 (MAASGGTKKAQSGGRRLREPSSRPSRRARQRPRRGALRKAGRFL) is disordered. Residues 24 to 44 (PSRRARQRPRRGALRKAGRFL) are compositionally biased toward basic residues.

Interacts with KLHL15; preventing ubiquitination and degradation of RBBP8/CtIP. Interacts with PARP1.

The protein resides in the nucleus. It localises to the nucleolus. It is found in the chromosome. Its function is as follows. Micropeptide that acts as a regulator of DNA repair both by preventing KLHL15-mediated ubiquitination and degradation of RBBP8/CtIP, and by promoting the poly-ADP-ribosyltransferase activity of PARP1. Prevents KLHL15-mediated ubiquitination of RBBP8/CtIP by competitively blocking the association between KLHL15 and RBBP8/CtIP. Recruited to DNA damage sites via association with poly-ADP-ribose chains, and enhances the poly-ADP-ribosyltransferase activity of PARP1. The protein is Poly-ADP-ribosylation-amplifying and CtIP-maintaining micropeptide of Homo sapiens (Human).